Here is a 370-residue protein sequence, read N- to C-terminus: Chaperone protein DnaJ (370 aa).

The region spanning 4-68 is the J domain; it reads DYYQVLGVSK…QKRAAYDRFG (65 aa). Residues 133 to 211 form a CR-type zinc finger; that stretch reads GIEKNISFSS…CHGMGRYHKQ (79 aa). Residues C146, C149, C163, C166, C185, C188, C199, and C202 each coordinate Zn(2+). CXXCXGXG motif repeat units follow at residues 146-153, 163-170, 185-192, and 199-206; these read CDACHGTG, CDSCGGVG, CHKCQGNG, and CKKCHGMG.

This sequence belongs to the DnaJ family. As to quaternary structure, homodimer. Requires Zn(2+) as cofactor.

The protein localises to the cytoplasm. Functionally, participates actively in the response to hyperosmotic and heat shock by preventing the aggregation of stress-denatured proteins and by disaggregating proteins, also in an autonomous, DnaK-independent fashion. Unfolded proteins bind initially to DnaJ; upon interaction with the DnaJ-bound protein, DnaK hydrolyzes its bound ATP, resulting in the formation of a stable complex. GrpE releases ADP from DnaK; ATP binding to DnaK triggers the release of the substrate protein, thus completing the reaction cycle. Several rounds of ATP-dependent interactions between DnaJ, DnaK and GrpE are required for fully efficient folding. Also involved, together with DnaK and GrpE, in the DNA replication of plasmids through activation of initiation proteins. This chain is Chaperone protein DnaJ, found in Rickettsia typhi (strain ATCC VR-144 / Wilmington).